The chain runs to 374 residues: o-succinylbenzoate synthase (374 aa).

The active-site Proton donor is the lysine 164. Residues aspartate 189, glutamate 214, and aspartate 239 each contribute to the Mg(2+) site. Residue lysine 263 is the Proton acceptor of the active site.

Belongs to the mandelate racemase/muconate lactonizing enzyme family. MenC type 2 subfamily. In terms of assembly, homodimer. It depends on a divalent metal cation as a cofactor.

It carries out the reaction (1R,6R)-6-hydroxy-2-succinyl-cyclohexa-2,4-diene-1-carboxylate = 2-succinylbenzoate + H2O. It participates in quinol/quinone metabolism; 1,4-dihydroxy-2-naphthoate biosynthesis; 1,4-dihydroxy-2-naphthoate from chorismate: step 4/7. Its pathway is quinol/quinone metabolism; menaquinone biosynthesis. Its function is as follows. Converts 2-succinyl-6-hydroxy-2,4-cyclohexadiene-1-carboxylate (SHCHC) to 2-succinylbenzoate (OSB). Also acts as a N-succinylamino acid racemase (NSAR) that catalyzes the racemization of N-succinyl-L-phenylglycine. L.innocua has the menaquinone synthesis pathway, indicating that the species requires OSBS activity. However, the NSAR/OSBS is not encoded in the menaquinone operon, raising the possibility that both NSAR and OSBS are biological functions. The sequence is that of o-succinylbenzoate synthase from Listeria innocua serovar 6a (strain ATCC BAA-680 / CLIP 11262).